Consider the following 284-residue polypeptide: Tropomyosin alpha-1 chain (284 aa).

Positions 1–37 are disordered; the sequence is MDAIKKKMQMLKLDKENALDRAEQAETDKKAAEERSK. Residues 1–284 are a coiled coil; the sequence is MDAIKKKMQM…DHALNDMTSI (284 aa). Positions 12–37 are enriched in basic and acidic residues; that stretch reads KLDKENALDRAEQAETDKKAAEERSK.

It belongs to the tropomyosin family. As to quaternary structure, homodimer. Heterodimer of an alpha (TPM1, TPM3 or TPM4) and a beta (TPM2) chain.

Its subcellular location is the cytoplasm. It is found in the cytoskeleton. Functionally, binds to actin filaments in muscle and non-muscle cells. Plays a central role, in association with the troponin complex, in the calcium dependent regulation of vertebrate striated muscle contraction. Smooth muscle contraction is regulated by interaction with caldesmon. In non-muscle cells is implicated in stabilizing cytoskeleton actin filaments. This Danio rerio (Zebrafish) protein is Tropomyosin alpha-1 chain (tpma).